A 357-amino-acid chain; its full sequence is 3-isopropylmalate dehydrogenase, chloroplastic (357 aa).

A chloroplast-targeting transit peptide spans 1–29; that stretch reads MALQIAKRLLRCRADSVASSVRFFDRTFT. Substrate-binding residues include Arg-120, Arg-130, Arg-151, and Asp-238. Mg(2+) is bound by residues Asp-238, Asp-262, and Asp-266. 296 to 308 is a binding site for NAD(+); that stretch reads GSAPDIAGKNLAN.

This sequence belongs to the isocitrate and isopropylmalate dehydrogenases family. Homodimer. It depends on Mg(2+) as a cofactor. The cofactor is Mn(2+).

Its subcellular location is the plastid. It localises to the chloroplast. The enzyme catalyses (2R,3S)-3-isopropylmalate + NAD(+) = 4-methyl-2-oxopentanoate + CO2 + NADH. Its pathway is amino-acid biosynthesis; L-leucine biosynthesis; L-leucine from 3-methyl-2-oxobutanoate: step 3/4. In terms of biological role, catalyzes the oxidation of 3-carboxy-2-hydroxy-4-methylpentanoate (3-isopropylmalate) to 3-carboxy-4-methyl-2-oxopentanoate. The product decarboxylates to 4-methyl-2 oxopentanoate. This chain is 3-isopropylmalate dehydrogenase, chloroplastic, found in Solanum tuberosum (Potato).